A 495-amino-acid polypeptide reads, in one-letter code: MATTIFSRFSIYFCAMLLCQGSMAQLFNPSTNPWHSPRQGSFRECRFDRLQAFEPLRKVRSEAGVTEYFDEKNELFQCTGTFVIRRVIQPQGLLVPRYSNTPGLVYIIQGRGSMGLTFPGCPATYQQQFQQFSSQGQSQSQKFRDEHQKIHQFRQGDVVALPAGVAHWFYNDGDASVVAIYVYDINNSANQLEPRQKEFLLAGNNNRVQQVYGSSIEQHSSQNIFNGFGTELLSEALGINTVAAKRLQSQNDQRGEIVHVKNGLQLLKPTLTQQQEQAQAQYQEVQYSEQQQTSSRWNGLEENFCTIKARVNIENPSRADSYNPRAGRISSVNSQKFPILNLIQMSATRVNLYQNAILSPFWNVNAHSLVYMIQGQSRVQVVSNFGKTVFDGVLRPGQLLIIPQHYAVLKKAEREGCQYIAIKTNANAFVSHLAGKNSVFRALPVDVVANAYRISREQARSIKNNRGEEHGAFTPRFQQQYYPGFSNESESETSE.

The N-terminal stretch at M1–A24 is a signal peptide. 2 disulfide bridges follow: C45–C78 and C121–C305. Cupin type-1 domains lie at L50–K245 and V311–R460. Residues N464–E495 are disordered.

This sequence belongs to the 11S seed storage protein (globulins) family. Hexamer; each subunit is composed of an acidic and a basic chain derived from a single precursor and linked by a disulfide bond.

Seed storage protein. The protein is Glutelin type-B 2 (GLUB2) of Oryza sativa subsp. japonica (Rice).